The chain runs to 98 residues: NADH-ubiquinone oxidoreductase chain 4L (98 aa).

The next 3 membrane-spanning stretches (helical) occupy residues 1–21 (MIPT…GMLT), 29–49 (SLLC…LIAL), and 61–81 (IILL…LVSI).

The protein belongs to the complex I subunit 4L family. As to quaternary structure, core subunit of respiratory chain NADH dehydrogenase (Complex I) which is composed of 45 different subunits.

It localises to the mitochondrion inner membrane. The catalysed reaction is a ubiquinone + NADH + 5 H(+)(in) = a ubiquinol + NAD(+) + 4 H(+)(out). Core subunit of the mitochondrial membrane respiratory chain NADH dehydrogenase (Complex I) which catalyzes electron transfer from NADH through the respiratory chain, using ubiquinone as an electron acceptor. Part of the enzyme membrane arm which is embedded in the lipid bilayer and involved in proton translocation. The sequence is that of NADH-ubiquinone oxidoreductase chain 4L (MT-ND4L) from Macaca ochreata subsp. brunnescens (Muna-buton macaque).